The primary structure comprises 143 residues: 3-dehydroquinate dehydratase (143 aa).

Tyr23 functions as the Proton acceptor in the catalytic mechanism. Substrate contacts are provided by Asn74, His80, and Asp87. His100 acts as the Proton donor in catalysis. Substrate is bound by residues 101-102 (IS) and Arg111.

This sequence belongs to the type-II 3-dehydroquinase family. Homododecamer.

It carries out the reaction 3-dehydroquinate = 3-dehydroshikimate + H2O. It participates in metabolic intermediate biosynthesis; chorismate biosynthesis; chorismate from D-erythrose 4-phosphate and phosphoenolpyruvate: step 3/7. Its function is as follows. Catalyzes a trans-dehydration via an enolate intermediate. The sequence is that of 3-dehydroquinate dehydratase from Endomicrobium trichonymphae.